We begin with the raw amino-acid sequence, 736 residues long: Polyphosphate kinase (736 aa).

Residue Asn91 participates in ATP binding. Residues Arg421 and Arg451 each contribute to the Mg(2+) site. The Phosphohistidine intermediate role is filled by His481. ATP is bound by residues Tyr514, Arg610, and His638.

The protein belongs to the polyphosphate kinase 1 (PPK1) family. Mg(2+) is required as a cofactor. In terms of processing, an intermediate of this reaction is the autophosphorylated ppk in which a phosphate is covalently linked to a histidine residue through a N-P bond.

The catalysed reaction is [phosphate](n) + ATP = [phosphate](n+1) + ADP. Catalyzes the reversible transfer of the terminal phosphate of ATP to form a long-chain polyphosphate (polyP). The sequence is that of Polyphosphate kinase from Pseudomonas syringae pv. tomato (strain ATCC BAA-871 / DC3000).